Reading from the N-terminus, the 265-residue chain is Zinc transporter ZupT (265 aa).

A run of 8 helical transmembrane segments spans residues 6–26, 37–57, 77–97, 122–142, 150–170, 184–204, 208–228, and 245–265; these read IAFA…GGAL, FMAA…FMEI, WTMM…DRLV, GMFT…ATFL, IAIP…IAVA, FWWA…GFAL, FIGP…MVFI, and CAIY…ALFI. Fe(2+) is bound by residues Asn133 and Glu136. Glu136 and His161 together coordinate Zn(2+). The Fe(2+) site is built by Asn162, Glu165, and Glu194. Glu165 lines the Zn(2+) pocket.

It belongs to the ZIP transporter (TC 2.A.5) family. ZupT subfamily.

It localises to the cell membrane. It carries out the reaction Zn(2+)(in) = Zn(2+)(out). Mediates zinc uptake. May also transport other divalent cations. This chain is Zinc transporter ZupT, found in Corynebacterium aurimucosum (strain ATCC 700975 / DSM 44827 / CIP 107346 / CN-1) (Corynebacterium nigricans).